We begin with the raw amino-acid sequence, 370 residues long: sn-glycerol-3-phosphate import ATP-binding protein UgpC (370 aa).

An ABC transporter domain is found at 4 to 236 (LSLKNIAKRY…PATAFVAAFM (233 aa)). 38–45 (GPSGCGKS) is a binding site for ATP.

It belongs to the ABC transporter superfamily. sn-glycerol-3-phosphate importer (TC 3.A.1.1.3) family. The complex is composed of two ATP-binding proteins (UgpC), two transmembrane proteins (UgpA and UgpE) and a solute-binding protein (UgpB).

It is found in the cell inner membrane. The catalysed reaction is sn-glycerol 3-phosphate(out) + ATP + H2O = sn-glycerol 3-phosphate(in) + ADP + phosphate + H(+). In terms of biological role, part of the ABC transporter complex UgpBAEC involved in sn-glycerol-3-phosphate (G3P) import. Responsible for energy coupling to the transport system. The protein is sn-glycerol-3-phosphate import ATP-binding protein UgpC of Chromobacterium violaceum (strain ATCC 12472 / DSM 30191 / JCM 1249 / CCUG 213 / NBRC 12614 / NCIMB 9131 / NCTC 9757 / MK).